Consider the following 180-residue polypeptide: Large ribosomal subunit protein bL17 (180 aa).

The tract at residues A134–N180 is disordered.

Belongs to the bacterial ribosomal protein bL17 family. In terms of assembly, part of the 50S ribosomal subunit. Contacts protein L32.

The sequence is that of Large ribosomal subunit protein bL17 from Mycobacterium tuberculosis (strain ATCC 25177 / H37Ra).